Reading from the N-terminus, the 315-residue chain is tRNA dimethylallyltransferase (315 aa).

14 to 21 is an ATP binding site; it reads GATATGKS. Residue 16 to 21 participates in substrate binding; the sequence is TATGKS. Residues 39 to 42 form an interaction with substrate tRNA region; sequence DSRQ.

Belongs to the IPP transferase family. As to quaternary structure, monomer. It depends on Mg(2+) as a cofactor.

The enzyme catalyses adenosine(37) in tRNA + dimethylallyl diphosphate = N(6)-dimethylallyladenosine(37) in tRNA + diphosphate. Its function is as follows. Catalyzes the transfer of a dimethylallyl group onto the adenine at position 37 in tRNAs that read codons beginning with uridine, leading to the formation of N6-(dimethylallyl)adenosine (i(6)A). In Microcystis aeruginosa (strain NIES-843 / IAM M-2473), this protein is tRNA dimethylallyltransferase.